The sequence spans 280 residues: Fructose-1,6-bisphosphatase class 1 (280 aa).

E64, D83, L85, and D86 together coordinate Mg(2+). Substrate contacts are provided by residues D86 to S89, Y189, and K220. Residue E226 participates in Mg(2+) binding.

It belongs to the FBPase class 1 family. As to quaternary structure, homotetramer. The cofactor is Mg(2+).

The protein localises to the cytoplasm. The enzyme catalyses beta-D-fructose 1,6-bisphosphate + H2O = beta-D-fructose 6-phosphate + phosphate. It functions in the pathway carbohydrate biosynthesis; gluconeogenesis. The protein is Fructose-1,6-bisphosphatase class 1 of Campylobacter jejuni subsp. jejuni serotype O:23/36 (strain 81-176).